Consider the following 114-residue polypeptide: Large ribosomal subunit protein bL17 (114 aa).

It belongs to the bacterial ribosomal protein bL17 family. In terms of assembly, part of the 50S ribosomal subunit. Contacts protein L32.

In Halothermothrix orenii (strain H 168 / OCM 544 / DSM 9562), this protein is Large ribosomal subunit protein bL17.